We begin with the raw amino-acid sequence, 156 residues long: uncharacterized protein (156 aa).

Residue His55 is part of the active site.

This sequence belongs to the thioester dehydratase family. FabZ subfamily.

This is an uncharacterized protein from Halalkalibacterium halodurans (strain ATCC BAA-125 / DSM 18197 / FERM 7344 / JCM 9153 / C-125) (Bacillus halodurans).